A 376-amino-acid polypeptide reads, in one-letter code: Transcription initiation factor IIA subunit 1 (376 aa).

At alanine 2 the chain carries N-acetylalanine. Low complexity-rich tracts occupy residues 69–79 (QVQQQHQPQQQ) and 89–105 (QAQP…TQQV). Disordered stretches follow at residues 69-107 (QVQQ…QVLI), 246-265 (AQAQ…PAQT), and 274-329 (DGTG…QELF). Phosphoserine; by TAF1 occurs at positions 280, 281, 316, and 321. A compositionally biased stretch (acidic residues) spans 280–329 (SSEEDEDEEEDYDDDEEEDKEKDGAEDGQVEEEPLNSEDDVSDEEGQELF). Residues histidine 343 and arginine 344 each coordinate DNA.

It belongs to the TFIIA subunit 1 family. TFIIA is a heterodimer of the large unprocessed subunit 1 and a small subunit gamma. It was originally believed to be a heterotrimer of an alpha (p35), a beta (p19) and a gamma subunit (p12). TFIIA forms a complex with TBP. Part of TBP-based Pol II pre-initiation complex (PIC), in which Pol II core assembles with general transcription factors and other specific initiation factors including GTF2E1, GTF2E2, GTF2F1, GTF2F2, TCEA1, ERCC2, ERCC3, GTF2H2, GTF2H3, GTF2H4, GTF2H5, GTF2A1, GTF2A2, GTF2B and TBP; this large multi-subunit PIC complex mediates DNA unwinding and targets Pol II core to the transcription start site where the first phosphodiester bond forms. The alpha and beta subunits are postranslationally produced from the precursor formby TASP1. The cleavage promotes proteasomal degradation.

It localises to the nucleus. Its function is as follows. TFIIA is a component of the transcription machinery of RNA polymerase II and plays an important role in transcriptional activation. TFIIA in a complex with TBP mediates transcriptional activity. This chain is Transcription initiation factor IIA subunit 1 (GTF2A1), found in Pongo abelii (Sumatran orangutan).